Here is a 124-residue protein sequence, read N- to C-terminus: Acidic phospholipase A2 BA1 (124 aa).

7 cysteine pairs are disulfide-bonded: Cys26/Cys116, Cys28/Cys44, Cys43/Cys95, Cys49/Cys124, Cys50/Cys88, Cys57/Cys81, and Cys75/Cys86. The Ca(2+) site is built by Tyr27, Gly29, and Gly31. His47 is a catalytic residue. Asp48 contacts Ca(2+). The active site involves Asp89.

The protein belongs to the phospholipase A2 family. Group II subfamily. D49 sub-subfamily. Requires Ca(2+) as cofactor. Expressed by the venom gland.

It is found in the secreted. It catalyses the reaction a 1,2-diacyl-sn-glycero-3-phosphocholine + H2O = a 1-acyl-sn-glycero-3-phosphocholine + a fatty acid + H(+). Its function is as follows. PLA2 catalyzes the calcium-dependent hydrolysis of the 2-acyl groups in 3-sn-phosphoglycerides. This chain is Acidic phospholipase A2 BA1, found in Gloydius halys (Chinese water mocassin).